We begin with the raw amino-acid sequence, 285 residues long: Bifunctional protein FolD (285 aa).

Residues 165-167 (GRS) and Ser-190 contribute to the NADP(+) site.

The protein belongs to the tetrahydrofolate dehydrogenase/cyclohydrolase family. In terms of assembly, homodimer.

It catalyses the reaction (6R)-5,10-methylene-5,6,7,8-tetrahydrofolate + NADP(+) = (6R)-5,10-methenyltetrahydrofolate + NADPH. The catalysed reaction is (6R)-5,10-methenyltetrahydrofolate + H2O = (6R)-10-formyltetrahydrofolate + H(+). It functions in the pathway one-carbon metabolism; tetrahydrofolate interconversion. Functionally, catalyzes the oxidation of 5,10-methylenetetrahydrofolate to 5,10-methenyltetrahydrofolate and then the hydrolysis of 5,10-methenyltetrahydrofolate to 10-formyltetrahydrofolate. The chain is Bifunctional protein FolD from Burkholderia mallei (strain NCTC 10247).